Here is a 311-residue protein sequence, read N- to C-terminus: Heme A synthase (311 aa).

Residues 1–6 (MQRFIK) lie on the Cytoplasmic side of the membrane. The chain crosses the membrane as a helical span at residues 7–27 (WLAVITSLDLLIVLLGGALVT). Residues 28 to 62 (KTGSGQGCGKSWPLCNGEFVPSNLSMETIIELSHR) are Extracellular-facing. A disulfide bond links Cys-35 and Cys-42. Residue Glu-58 is part of the active site. His-61 provides a ligand contact to heme o. The chain crosses the membrane as a helical span at residues 63–83 (LTSGSAGILVTLLCILSWKYY). At 84-91 (KHVRETKT) the chain is on the cytoplasmic side. Residues 92-112 (LAILSFVFLVAQALMGAAAVV) form a helical membrane-spanning segment. The Extracellular segment spans residues 113–121 (WGQMPAVLA). A helical transmembrane segment spans residues 122 to 142 (IHFGISLISFASVILLTCLIF). Residue His-123 coordinates heme o. The Cytoplasmic segment spans residues 143 to 159 (EIDQKFDARSLIMDKKM). The chain crosses the membrane as a helical span at residues 160–180 (KFHIYGVTIYSYIVVYTGALV). The Extracellular segment spans residues 181 to 211 (RHERASLACPDFPLCSKNRPMPTQLHEWVQM). Cys-189 and Cys-195 are disulfide-bonded. Residues 212 to 232 (GHRVAAMLIFAWILYAMILAI) traverse the membrane as a helical segment. Heme b is bound at residue His-213. Residues 233–243 (RHYKQQPVVYW) are Cytoplasmic-facing. The chain crosses the membrane as a helical span at residues 244-264 (GWIISFILVTLQAVVGVLVVF). Residues 265–271 (TNASLAM) are Extracellular-facing. Residues 272 to 292 (ALLHSLFISCLFAVLCYLVML) form a helical membrane-spanning segment. Residue His-275 coordinates heme b. At 293 to 311 (GTRIKVNAKEAGSTSKQTK) the chain is on the cytoplasmic side.

The protein belongs to the COX15/CtaA family. Type 1 subfamily. In terms of assembly, interacts with CtaB. Requires heme b as cofactor.

It is found in the cell membrane. It catalyses the reaction Fe(II)-heme o + 2 A + H2O = Fe(II)-heme a + 2 AH2. It functions in the pathway porphyrin-containing compound metabolism; heme A biosynthesis; heme A from heme O: step 1/1. Functionally, catalyzes the conversion of heme O to heme A by two successive hydroxylations of the methyl group at C8. The first hydroxylation forms heme I, the second hydroxylation results in an unstable dihydroxymethyl group, which spontaneously dehydrates, resulting in the formyl group of heme A. The chain is Heme A synthase from Bacillus cereus (strain G9842).